The chain runs to 198 residues: NAD(P)H dehydrogenase (quinone) (198 aa).

One can recognise a Flavodoxin-like domain in the interval 4 to 190 (VLVLYYSAYG…EGAKYQGAHV (187 aa)). FMN is bound by residues 10–15 (SAYGHI) and 78–80 (TRF). NAD(+) is bound at residue tyrosine 12. Residue tryptophan 98 participates in substrate binding. FMN is bound by residues 113–119 (SSATQHG) and histidine 134.

It belongs to the WrbA family. FMN serves as cofactor.

It catalyses the reaction a quinone + NADH + H(+) = a quinol + NAD(+). It carries out the reaction a quinone + NADPH + H(+) = a quinol + NADP(+). The protein is NAD(P)H dehydrogenase (quinone) of Rhizobium johnstonii (strain DSM 114642 / LMG 32736 / 3841) (Rhizobium leguminosarum bv. viciae).